Reading from the N-terminus, the 169-residue chain is Putative tRNA (cytidine(34)-2'-O)-methyltransferase (169 aa).

S-adenosyl-L-methionine is bound by residues Ile-79, Gly-104, Ile-125, and Ser-133.

The protein belongs to the class IV-like SAM-binding methyltransferase superfamily. RNA methyltransferase TrmH family. TrmL subfamily.

It is found in the cytoplasm. It carries out the reaction cytidine(34) in tRNA + S-adenosyl-L-methionine = 2'-O-methylcytidine(34) in tRNA + S-adenosyl-L-homocysteine + H(+). The enzyme catalyses 5-carboxymethylaminomethyluridine(34) in tRNA(Leu) + S-adenosyl-L-methionine = 5-carboxymethylaminomethyl-2'-O-methyluridine(34) in tRNA(Leu) + S-adenosyl-L-homocysteine + H(+). In terms of biological role, could methylate the ribose at the nucleotide 34 wobble position in tRNA. In Listeria monocytogenes serotype 4b (strain F2365), this protein is Putative tRNA (cytidine(34)-2'-O)-methyltransferase.